We begin with the raw amino-acid sequence, 863 residues long: DNA replication licensing factor mcm4 (863 aa).

The segment at M1–A121 is disordered. Polar residues-rich tracts occupy residues S54 to G64 and S78 to V99. The C4-type zinc-finger motif lies at C306–C331. The region spanning I458 to V667 is the MCM domain. Residues Y471, R497, K516, S517, N618, R643, R732, and E735 each coordinate ATP. The Arginine finger motif lies at S642 to D645.

The protein belongs to the MCM family. Component of the mcm2-7 complex (RLF-M). The complex forms a toroidal hexameric ring with the proposed subunit order mcm2-mcm6-mcm4-mcm7-mcm3-mcm5. The heterodimer of mmcm3/mcm5 interacts with mcm4, mmcm6, mcm7 and weakly with mcm2. Component of the CMG helicase complex, composed of the mcm2-7 complex, the GINS complex and cdc45. In terms of processing, hyperphosphorylated during mitosis in a mechanism requiring cdc2-cyclin B and other kinases. Undergoes dephosphorylation after exiting mitosis, existing in a partially phosphorylated state in the cytosolic interphase mcm complex which associates with the pre-replication complexes (pre-Rcs). Complete dephosphorylation inactivates the mcm complex, preventing its binding to chromatin. Becomes actively phosphorylated during S phase once the mcm complex is assembled on the chromatin. This chromatin-associated phosphorylation occurs during the activation of the pre-Rcs and is independent of cdks. Phosphorylated by the cdc7-dbf4b complex.

The protein localises to the nucleus. It localises to the chromosome. It catalyses the reaction ATP + H2O = ADP + phosphate + H(+). In terms of biological role, acts as a component of the MCM2-7 complex (MCM complex) which is the replicative helicase essential for 'once per cell cycle' DNA replication initiation and elongation in eukaryotic cells. Core component of CDC45-MCM-GINS (CMG) helicase, the molecular machine that unwinds template DNA during replication, and around which the replisome is built. The active ATPase sites in the MCM2-7 ring are formed through the interaction surfaces of two neighboring subunits such that a critical structure of a conserved arginine finger motif is provided in trans relative to the ATP-binding site of the Walker A box of the adjacent subunit. The six ATPase active sites, however, are likely to contribute differentially to the complex helicase activity. This is DNA replication licensing factor mcm4 from Xenopus tropicalis (Western clawed frog).